A 365-amino-acid chain; its full sequence is Elongation factor Tu (365 aa).

Residues His-1–Thr-7, Asp-62–His-66, and Asn-117–Asp-120 each bind GTP. The tr-type G domain maps to His-1–Lys-185. Residue Thr-7 coordinates Mg(2+).

It belongs to the TRAFAC class translation factor GTPase superfamily. Classic translation factor GTPase family. EF-Tu/EF-1A subfamily. As to quaternary structure, monomer.

The protein localises to the cytoplasm. It carries out the reaction GTP + H2O = GDP + phosphate + H(+). Functionally, GTP hydrolase that promotes the GTP-dependent binding of aminoacyl-tRNA to the A-site of ribosomes during protein biosynthesis. The protein is Elongation factor Tu of Buchnera aphidicola subsp. Melaphis rhois.